Here is a 127-residue protein sequence, read N- to C-terminus: MEIFVGTDIMEVERIKKILEKRPHFLERIFTEKEREFLRKKKNPWPHLAGFFSAKESVSKVLGTGIRGFSWQDIEIIHNEYGKPEVVLKGKAKAIAAEKGIKEIKLSISHTSDYAMSVAIAVGGENS.

2 residues coordinate Mg(2+): D8 and E56.

This sequence belongs to the P-Pant transferase superfamily. AcpS family. It depends on Mg(2+) as a cofactor.

It localises to the cytoplasm. It carries out the reaction apo-[ACP] + CoA = holo-[ACP] + adenosine 3',5'-bisphosphate + H(+). Functionally, transfers the 4'-phosphopantetheine moiety from coenzyme A to a Ser of acyl-carrier-protein. The polypeptide is Holo-[acyl-carrier-protein] synthase (Caldanaerobacter subterraneus subsp. tengcongensis (strain DSM 15242 / JCM 11007 / NBRC 100824 / MB4) (Thermoanaerobacter tengcongensis)).